The primary structure comprises 240 residues: Carboxy-S-adenosyl-L-methionine synthase (240 aa).

S-adenosyl-L-methionine is bound by residues tyrosine 35, 61-63 (GCS), 86-87 (DN), 112-113 (DI), and arginine 194.

It belongs to the class I-like SAM-binding methyltransferase superfamily. Cx-SAM synthase family. In terms of assembly, homodimer.

The enzyme catalyses prephenate + S-adenosyl-L-methionine = carboxy-S-adenosyl-L-methionine + 3-phenylpyruvate + H2O. In terms of biological role, catalyzes the conversion of S-adenosyl-L-methionine (SAM) to carboxy-S-adenosyl-L-methionine (Cx-SAM). This Wolinella succinogenes (strain ATCC 29543 / DSM 1740 / CCUG 13145 / JCM 31913 / LMG 7466 / NCTC 11488 / FDC 602W) (Vibrio succinogenes) protein is Carboxy-S-adenosyl-L-methionine synthase.